The sequence spans 202 residues: FMN reductase (NADH) RutF (202 aa).

Positions 168-191 (PRAPRGGSAPAEPARGARAIGARP) are enriched in low complexity. The tract at residues 168–202 (PRAPRGGSAPAEPARGARAIGARPPEGPVLALRSA) is disordered.

It belongs to the non-flavoprotein flavin reductase family. RutF subfamily.

It catalyses the reaction FMNH2 + NAD(+) = FMN + NADH + 2 H(+). In terms of biological role, catalyzes the reduction of FMN to FMNH2 which is used to reduce pyrimidine by RutA via the Rut pathway. The sequence is that of FMN reductase (NADH) RutF from Methylorubrum populi (strain ATCC BAA-705 / NCIMB 13946 / BJ001) (Methylobacterium populi).